Consider the following 149-residue polypeptide: Large ribosomal subunit protein bL9 (149 aa).

The protein belongs to the bacterial ribosomal protein bL9 family.

In terms of biological role, binds to the 23S rRNA. This is Large ribosomal subunit protein bL9 from Actinobacillus pleuropneumoniae serotype 3 (strain JL03).